We begin with the raw amino-acid sequence, 533 residues long: MTKFIFVTGGVVSGLGKGITSASLGMLMKARGFRTTNIKIDPYLNYDAGTMNPYQHGEVFVLDDGGEVDLDLGNYERFLDTSLSFDHNITTGKVYSAVIEKERKGEYLGATVQVIPHITNEIKERIRRIARDYDVVIVEIGGTVGDIEGMPFLEAARQMQLEEGRENVAFVHVTYVPKLKVVGEQKTKPTQHSVKELRSLGIQPDAIVARSEEPLEESARRKISLFTNVPEEAVISAYDVEDTYEVPLMLEKEGLARYLVRRLGLPEREPDLEKWREMVEKYKSLDKEVEIAIVGKYVKLADSYLSIKEALKHSSVANDVKVKIRWIEAEDVERKGVKLLEGVDGIIVPGGFGARGSEGKMMAIRYARENDIPFLGICFGFQLTVVEFARNVLGLKGAHSTEIDPQTPYPVVDLMPEQRDLDRLGGTMRLGAYPVHIKPNTLAKRLYGREIVYERHRHRWEVNPDYIEKLESAGLVFSGIAGDDERRMEILELPDHSYFIATQFHPEFKSRPMNPAPVFRGLVRAARERKYGG.

Residues 1–265 (MTKFIFVTGG…ARYLVRRLGL (265 aa)) are amidoligase domain. S13 contacts CTP. S13 lines the UTP pocket. An ATP-binding site is contributed by 14 to 19 (GLGKGI). An L-glutamine-binding site is contributed by Y54. D71 is an ATP binding site. Positions 71 and 139 each coordinate Mg(2+). Residues 146-148 (DIE), 186-191 (KTKPTQ), and K222 each bind CTP. UTP contacts are provided by residues 186 to 191 (KTKPTQ) and K222. Residues 290-532 (EIAIVGKYVK…VRAARERKYG (243 aa)) enclose the Glutamine amidotransferase type-1 domain. G351 is an L-glutamine binding site. C378 (nucleophile; for glutamine hydrolysis) is an active-site residue. L-glutamine is bound by residues 379–382 (FGFQ), E402, and R459. Catalysis depends on residues H505 and E507.

The protein belongs to the CTP synthase family. Homotetramer.

It catalyses the reaction UTP + L-glutamine + ATP + H2O = CTP + L-glutamate + ADP + phosphate + 2 H(+). The enzyme catalyses L-glutamine + H2O = L-glutamate + NH4(+). It carries out the reaction UTP + NH4(+) + ATP = CTP + ADP + phosphate + 2 H(+). Its pathway is pyrimidine metabolism; CTP biosynthesis via de novo pathway; CTP from UDP: step 2/2. Allosterically activated by GTP, when glutamine is the substrate; GTP has no effect on the reaction when ammonia is the substrate. The allosteric effector GTP functions by stabilizing the protein conformation that binds the tetrahedral intermediate(s) formed during glutamine hydrolysis. Inhibited by the product CTP, via allosteric rather than competitive inhibition. Catalyzes the ATP-dependent amination of UTP to CTP with either L-glutamine or ammonia as the source of nitrogen. Regulates intracellular CTP levels through interactions with the four ribonucleotide triphosphates. The chain is CTP synthase from Thermococcus gammatolerans (strain DSM 15229 / JCM 11827 / EJ3).